The primary structure comprises 411 residues: Diels-Alderase ffsF (411 aa).

A signal peptide spans 1-17 (MTQIKLLLLSLAITAQS).

The protein belongs to the Diels-Alderase family.

The protein operates within mycotoxin biosynthesis. In terms of biological role, diels-Alderase; part of the gene cluster that mediates the biosynthesis of the cytotoxic leucine-containing cytochalasans, including aspochalasin C, aspochalasin E, TMC-169, flavichalasine F, aspergillin PZ, aspochalasin M and flavichalasine G. The first step in the pathway is catalyzed by the hybrid PKS-NRPS ffsA that utilizes 8 units of malonyl-CoA to iteratively assemble the octaketide chain before addition of L-leucine by the C-terminal NRPS modules. Because ffsA lacks a designated enoylreductase (ER) domain, the required activity is provided the enoyl reductase fssC. The methyltransferase (MT) domain of ffsA catalyzes the alpha-methylation at C10 and C14 using S-adenosyl-L-methionine as the methyl-donating cosubstrate. Reduction by the hydrolyase ffsE, followed by dehydration and intra-molecular Diels-Alder cyclization by the Diels-Alderase ffsF then yield the required isoindolone-fused macrocycle. A number of oxidative steps catalyzed by the tailoring cytochrome P450 monooxygenase ffsD, the FAD-linked oxidoreductase ffsJ and the short-chain dehydrogenase/reductase ffsI, are further required to afford the final products. This chain is Diels-Alderase ffsF, found in Aspergillus flavipes.